The following is a 194-amino-acid chain: uncharacterized protein (194 aa).

Disordered regions lie at residues 1–21 (MPKGRRGSQNPKMSQRPAPPL) and 73–97 (PATVPPPPPGLGPPSERPCPPPWPS). A compositionally biased stretch (pro residues) spans 73–96 (PATVPPPPPGLGPPSERPCPPPWP).

This is an uncharacterized protein from Mus musculus (Mouse).